Here is a 105-residue protein sequence, read N- to C-terminus: Vacuolar ATPase assembly integral membrane protein VMA21 homolog (105 aa).

Residues 1-26 (MSTKNKKAAGGNGGAPKQTRQQSHDS) form a disordered region. Residues 1 to 36 (MSTKNKKAAGGNGGAPKQTRQQSHDSQDYSSFKTVL) are Cytoplasmic-facing. A helical transmembrane segment spans residues 37 to 57 (FYCMLIVFLPVLTFFVLKGFV). Residues 58 to 68 (LDQFLDISEVK) are Lumenal-facing. A helical transmembrane segment spans residues 69 to 89 (VNIASAVGAVVALHIALGLYI). The Cytoplasmic segment spans residues 90–105 (YRAYFGTTGSKASKTD).

It belongs to the VMA21 family.

The protein localises to the endoplasmic reticulum membrane. It localises to the endoplasmic reticulum-Golgi intermediate compartment membrane. Its subcellular location is the cytoplasmic vesicle. The protein resides in the COPII-coated vesicle membrane. Its function is as follows. Required for the assembly of the V0 complex of the vacuolar ATPase (V-ATPase) in the endoplasmic reticulum. The sequence is that of Vacuolar ATPase assembly integral membrane protein VMA21 homolog from Drosophila erecta (Fruit fly).